The primary structure comprises 252 residues: ATP synthase subunit a (252 aa).

Helical transmembrane passes span 29–49 (FTNV…FLFI), 87–107 (FFPL…IGLF), 117–137 (IMIT…YGFY), 146–166 (LFVP…IEVI), 196–216 (FIVS…LPLI), and 219–239 (VAIT…FTVL).

The protein belongs to the ATPase A chain family. In terms of assembly, F-type ATPases have 2 components, CF(1) - the catalytic core - and CF(0) - the membrane proton channel. CF(1) has five subunits: alpha(3), beta(3), gamma(1), delta(1), epsilon(1). CF(0) has three main subunits: a(1), b(2) and c(9-12). The alpha and beta chains form an alternating ring which encloses part of the gamma chain. CF(1) is attached to CF(0) by a central stalk formed by the gamma and epsilon chains, while a peripheral stalk is formed by the delta and b chains.

The protein resides in the cell inner membrane. Key component of the proton channel; it plays a direct role in the translocation of protons across the membrane. This Bartonella henselae (strain ATCC 49882 / DSM 28221 / CCUG 30454 / Houston 1) (Rochalimaea henselae) protein is ATP synthase subunit a.